A 478-amino-acid chain; its full sequence is Glycogen synthase (478 aa).

Lysine 16 is an ADP-alpha-D-glucose binding site.

This sequence belongs to the glycosyltransferase 1 family. Bacterial/plant glycogen synthase subfamily.

It catalyses the reaction [(1-&gt;4)-alpha-D-glucosyl](n) + ADP-alpha-D-glucose = [(1-&gt;4)-alpha-D-glucosyl](n+1) + ADP + H(+). It participates in glycan biosynthesis; glycogen biosynthesis. Its function is as follows. Synthesizes alpha-1,4-glucan chains using ADP-glucose. In Lachnospira eligens (strain ATCC 27750 / DSM 3376 / VPI C15-48 / C15-B4) (Eubacterium eligens), this protein is Glycogen synthase.